We begin with the raw amino-acid sequence, 901 residues long: MLIKLLTKVFGSRNDRTLRRMRKAVSLINAMEPEMEKLSDDELKAKTNEFRARIEKGESVESLIPEAFAVVREASKRVFGMRHFDVQLLGGMVLNDRCIAEMRTGEGKTLTATLPAYLNALSGKGVHVVTVNDYLAQRDAENNRPLFEFLGMSVGINLPGMPAPAKREAYAADITYGTNNEYGFDYLRDNMAFSPEERVQRKLHYALVDEVDSILIDEARTPLIISGPAEDSSEMYKKVNKIIPHLIRQEKEDSDTFQGEGHFSVDEKARQVNLTERGLVLIEELLVQEGIMDEGESLYSPGNIMLMHHVTAALRAHALFTRDVDYIVKDGEVIIVDEHTGRTMQGRRWSDGLHQAVEAKEGVEIQNENQTLASITFQNYFRLYEKLAGMTGTADTEAFEFSSIYKLDTVVVPTNRPMIRKDLPDLVYMTEAEKIQAIIEDIKERTANGQPVLVGTISIEKSEVVSRELTKAGIKHNVLNAKFHANEAGIVAQAGYPAAVTIATNMAGRGTDIMLGGSWQAEVAALEAPTEEQIAQIKADWQVRHDAVLAAGGLHIIGTERHESRRIDNQLRGRSGRQGDPGSSRFYLSMEDALMRIFASDRVSGMMRKLGMKPGEAIEHPWVTKAIANAQRKVESRNFDIRKQLLEYDDVANDQRRAIYTQRNELLDVSDVSDTINSIREDVFKETIDAYIPPQSLEEMWDIPGLQERLKNDFDLEMPIAEWLDKEPELHEETLRERILAQSIEVYQRKEEVVGAEMMRHFEKGVMLQTLDSLWKEHLAAMDYLRQGIHLRGYAQKDPKQEYKRESFAMFAAMLESLKYEVISTLSKVQVRMPEEVEAMEMQRREEAERLAQMQQLSHQDDDAAVAADLAAQTGERKIGRNDPCPCGSGKKYKQCHGRLS.

ATP is bound by residues Gln-87, 105 to 109, and Asp-512; that span reads GEGKT. Zn(2+) contacts are provided by Cys-885, Cys-887, Cys-896, and His-897.

The protein belongs to the SecA family. As to quaternary structure, monomer and homodimer. Part of the essential Sec protein translocation apparatus which comprises SecA, SecYEG and auxiliary proteins SecDF-YajC and YidC. Zn(2+) serves as cofactor.

The protein localises to the cell inner membrane. It localises to the cytoplasm. The catalysed reaction is ATP + H2O + cellular proteinSide 1 = ADP + phosphate + cellular proteinSide 2.. Functionally, part of the Sec protein translocase complex. Interacts with the SecYEG preprotein conducting channel. Has a central role in coupling the hydrolysis of ATP to the transfer of proteins into and across the cell membrane, serving both as a receptor for the preprotein-SecB complex and as an ATP-driven molecular motor driving the stepwise translocation of polypeptide chains across the membrane. In Salmonella enteritidis PT4 (strain P125109), this protein is Protein translocase subunit SecA.